The following is a 341-amino-acid chain: Type II restriction enzyme BgcI specificity subunit S.BcgI (341 aa).

Belongs to the type-I restriction system S methylase family. As to quaternary structure, heterotrimer of two A and one B subunit. Both subunits are necessary for DNA-binding, which is sequence non-specific. Requires Mg(2+) as cofactor.

It catalyses the reaction Endonucleolytic cleavage of DNA to give specific double-stranded fragments with terminal 5'-phosphates.. DNA restriction requires S-adenosyl-L-methionine and Mg(2+), and is inhibited by S-adenosyl-homocysteine. SAM may be a cofactor for DNA restriction. Its function is as follows. The specificity subunit. A B, G, H and S subtype restriction enzyme that recognizes the double-stranded sequence 5'-CGAN(6)TGC-3' and cleaves bilaterally and symmetrically 10 base pairs upstream and 12 base pairs downstream of the sequence to release a 34-base pair fragment. Methylation of the recognition sequence occurs on the adenine in either one or both strands; seems to methylate restricted DNA. This subunit degrades DNA in a non-specific manner. This Heyndrickxia coagulans (Weizmannia coagulans) protein is Type II restriction enzyme BgcI specificity subunit S.BcgI.